Consider the following 433-residue polypeptide: MSKIVKVLGREIIDSRGNPTVEAEVHLEGGFVGMAAAPSGASTGSREALELRDGDKARFLGKGVLKAIEAVNGAIADALVGKDAKDQAAIDAIMIELDGTENKSKFGANAILAVSLANAKAAAASKGMPLYEHIAELNGTAGQFSMPLPMMNIINGGEHADNNVDIQEFMIQPVGAKTLKEAVRMGAEVFHNLAKVLKSKGYNTAVGDEGGFAPNLKSNAEALEVIAEAVAAAGYVLGKDVTLAMDCAASEFFDKEAGIYNMKGEGKTFTSEEFNHYLAGLVEQFPIVSIEDGLDESDWAGFAHQTQLLGDKIQLVGDDLFVTNTKILAEGIEKGIANSILIKFNQIGSLTETLAAIKMAKDAGYTAVISHRSGETEDATIADLAVGTAAGQIKTGSMSRSDRVAKYNQLIRIEEALAGRAPFNGLKEVKGQA.

Residue glutamine 167 coordinates (2R)-2-phosphoglycerate. The active-site Proton donor is glutamate 209. Aspartate 246, glutamate 291, and aspartate 318 together coordinate Mg(2+). The (2R)-2-phosphoglycerate site is built by lysine 343, arginine 372, serine 373, and lysine 394. Lysine 343 serves as the catalytic Proton acceptor.

It belongs to the enolase family. In terms of assembly, component of the RNA degradosome, a multiprotein complex involved in RNA processing and mRNA degradation. Mg(2+) is required as a cofactor.

It localises to the cytoplasm. Its subcellular location is the secreted. The protein localises to the cell surface. The enzyme catalyses (2R)-2-phosphoglycerate = phosphoenolpyruvate + H2O. It participates in carbohydrate degradation; glycolysis; pyruvate from D-glyceraldehyde 3-phosphate: step 4/5. Functionally, catalyzes the reversible conversion of 2-phosphoglycerate (2-PG) into phosphoenolpyruvate (PEP). It is essential for the degradation of carbohydrates via glycolysis. The protein is Enolase of Vibrio vulnificus (strain CMCP6).